The following is a 614-amino-acid chain: Interleukin-18 receptor accessory protein (614 aa).

An N-terminal signal peptide occupies residues 1 to 19 (MLCLGWVFLWFVAGEKTTG). Topologically, residues 20-356 (FNHSACATKK…RTIRLRKKEE (337 aa)) are extracellular. The N-linked (GlcNAc...) asparagine glycan is linked to Asn-21. A disulfide bridge links Cys-46 with Cys-126. The tract at residues 59–78 (ASQLSPTQSPAHKPCSGSQK) is disordered. Ig-like C2-type domains follow at residues 148-234 (PQRN…WTVR) and 250-352 (PEIL…IRLR). N-linked (GlcNAc...) asparagine glycosylation is present at Asn-151. Intrachain disulfides connect Cys-154–Cys-179, Cys-174–Cys-220, and Cys-179–Cys-220. Residue Asn-227 is glycosylated (N-linked (GlcNAc...) asparagine). Cys-272 and Cys-336 are joined by a disulfide. Asn-344 carries N-linked (GlcNAc...) asparagine glycosylation. Residues 357–377 (VVFVYILLGTALMLVGVLVAA) form a helical membrane-spanning segment. Topologically, residues 378-614 (AFLYWYWIEV…LLLYSDQKRC (237 aa)) are cytoplasmic. A TIR domain is found at 405-558 (KEFDAFVSYS…RFWTQIRYHM (154 aa)). The active site involves Glu-492.

Belongs to the interleukin-1 receptor family. In terms of assembly, forms a ternary complex with IL18 and IL18R1. Within this complex, IL18R1 is involved in ligand-binding and IL18RAP in signaling leading to NF-kappa-B and JNK activation.

It is found in the cell membrane. The catalysed reaction is NAD(+) + H2O = ADP-D-ribose + nicotinamide + H(+). Within the IL18 receptor complex, does not mediate IL18-binding, but involved in IL18-dependent signal transduction, leading to NF-kappa-B and JNK activation. May play a role in IL18-mediated IFNG synthesis from T-helper 1 (Th1) cells. This is Interleukin-18 receptor accessory protein from Mus musculus (Mouse).